The primary structure comprises 170 residues: Putative calmodulin-like protein 6 (170 aa).

4 EF-hand domains span residues 8-43 (QQIS…LGMA), 44-79 (PSQE…KLYE), 84-119 (DDEE…LGEE), and 120-155 (MTED…TWNI). 19 residues coordinate Ca(2+): D21, N23, D25, C27, E32, D57, D59, N61, T63, E68, D97, D99, N101, E108, D133, N135, D137, Q139, and E144.

It belongs to the calmodulin family.

Functionally, potential calcium sensor. In Oryza sativa subsp. japonica (Rice), this protein is Putative calmodulin-like protein 6 (CML6).